Here is a 2167-residue protein sequence, read N- to C-terminus: MTHSPATSEDEERHSASECPEGGSESDSSPDGPGRGPQGTRGRGSGAPGNLASTRGLQGRSMSVPDDAHFSMMVFRIGIPDLHQTKCLRFNPDATIWTAKQQVLCALSESLQDVLNYGLFQPATSGRDANFLEEERLLREYPQSFEKGVPYLEFRYKTRVYKQTNLDEKQLAKLHTKTGLKKFLEYVQLGTSDKVARLLDKGLDPNYHDSDSGETPLTLAAQTEGSVEVIRTLCLGGAHIDFRARDGMTALHKAACARHCLALTALLDLGGSPNYKDRRGLTPLFHTAMVGGDPRCCELLLYNRAQLGIADENGWQEIHQACQRGHSQHLEHLLFYGAEPGAQNASGNTALHICALYNKETCARILLYRGANKDVKNNNGQTPFQVAVIAGNFELGELIRNHREQDVVPFQESPKYAARRRGPPGAGLTVPPALLRANSDTSMALPDWMVFSAPGASSSGTPGPTSGSQGQSQPSAPSTKLSSGTLRSASSPRGARARSPSRGRHPEDAKRQPRGRPSSSGTPRDGPAGGTGGSGGPGGSLGSRGRRRKLYSAVPGRSFMAVKSYQAQGEGEISLSKGEKIKVLSIGEGGFWEGQVKGRVGWFPSDCLEEVANRSQEGRQESRSDKAKRLFRHYTVGSYDSFDAPSLIDGIDSGSDYIIKEKTVLLQKKDSEGFGFVLRGAKAQTPIEEFTPTPAFPALQYLESVDEGGVAWRAGLRMGDFLIEVNGQNVVKVGHRQVVNMIRQGGNTLMVKVVMVTRHPDMDEAVHKKASQQAKRLPPPAISLRSKSMTSELEEMVSPWKKKIEYEQQPAAVPSMEKKRTVYQMALNKLDEILAAAQQTISASESPGPGGLASLGKHRPKGFFATESSFDPHHRSQPSYDRPSFLPPGPGLMLRQKSIGAAEDDRPYLAPPAMKFSRSLSVPGSEDIPPPPTTSPPEPPYSTPPAPSSSGRLTPSPRGGPFNPGSGGPLPASSPSSFDGPSPPDPRSGGREKSLYHSGALPPAHHHPPHHHHHHAPPPQPHHHHAHPPHPPEMETGGSPDDPPPRLALGPQPSLRGWRGGGPSPTSGAPSPSHHSSSGGSSGPAQAPALRYFQLPPRAASAAMYVPARSGRGRKGPLVKQTKVEGEPQKGSLPPASSPTSPALPRSEPPPAGPSEKNSIPIPTIIIKAPSTSSSGRSSQGSSTEAEPPTQPDGAGGGGSSPSPAPATSPVPPSPSPVPTPASPSGPATLDFTSQFGAALVGAARREGGWQNEARRRSTLFLSTDAGDEDGGDSGLGPGAPPGPRLRHSKSIDEGMFSAEPYLRLESGGSSGGYGAYAAGSRAYGGSGSSSAFTSFLPPRPLVHPLTGKALDPASPLGLALAARERALKESSEGGVTPQPPPRPPSPRYDAPPPTLHHHSPHSPHSPHARHEPVLRLWGDPARRELGYRAGLGSQEKALTASPPAARRSLLHRLPPTAPGVGPLLLQLGPEPPTPHPGVSKAWRTAAPEEPERLPLHVRFLENCQARPPPAGTRGSSTEDGPGVPPPSPRRVLPTSPTSPRGNEENGLPLLVLPPPAPSVDVDDGEFLFAEPLPPPLEFSNSFEKPESPLTPGPPHPLPDPPSPATPLPAAPPPAVAAAPPTLDSTASSLTSYDSEVATLTQGAPAAPGDPPAPGPPAPAAPAPPAPQPGPDPPPGTDSGIEEVDSRSSSDHPLETISSASTLSSLSAEGGGNTGGVAGGGAGVASGTELLDTYVAYLDGQAFGGSGTPGPPYPPQLMTPSKLRGRALGTSGNLRPGPSGGLRDPVTPTSPTVSVTGAGTDGLLALSACSGPSTAGVAGGPVAVEPEVPPVPLPTASSLPRKLLPWEEGPGPPPPPLPGPLSQPQASALATVKASIISELSSKLQQFGGASTAGGALPWARGGSGGSTDSHHGGASYIPERTSSLQRQRLSEDSQTSLLSKPSSSIFQNWPKPPLPPLPTGSGVSSSTAAAPGATSPSASSASASTRHLQGVEFEMRPPLLRRAPSPSLLPASDHKVSPAPRPSSLPILPSGPLYPGLFDIRSSPTGGAGGSADPFAPVFVPPHPGISGGLGGALSGASRSLSPTRLLSLPPDKPFGAKPLGFWTKFDVADWLEWLGLSEHRAQFLDHEIDGSHLPALTKEDYVDLGVTRVGHRMNIDRALKFFLER.

The interval 1–63 is disordered; that stretch reads MTHSPATSED…TRGLQGRSMS (63 aa). Residues 17-32 are compositionally biased toward low complexity; it reads SECPEGGSESDSSPDG. Residues 33 to 47 are compositionally biased toward gly residues; it reads PGRGPQGTRGRGSGA. Arginine 43 bears the Omega-N-methylarginine mark. The residue at position 186 (tyrosine 186) is a Phosphotyrosine. ANK repeat units lie at residues 212 to 242, 246 to 275, 279 to 309, 313 to 342, 346 to 375, and 379 to 407; these read SGET…HIDF, DGMT…SPNY, RGLT…QLGI, NGWQ…EPGA, SGNT…NKDV, and NGQT…EQDV. Disordered regions lie at residues 413–432 and 454–546; these read SPKY…TVPP and PGAS…SRGR. Residues 454–479 are compositionally biased toward low complexity; the sequence is PGASSSGTPGPTSGSQGQSQPSAPST. Residues 527–542 show a composition bias toward gly residues; sequence PAGGTGGSGGPGGSLG. Position 540 is a phosphoserine (serine 540). Arginine 544 is subject to Omega-N-methylarginine. Residues 554 to 613 form the SH3 domain; the sequence is VPGRSFMAVKSYQAQGEGEISLSKGEKIKVLSIGEGGFWEGQVKGRVGWFPSDCLEEVAN. Residues 663–757 enclose the PDZ domain; the sequence is TVLLQKKDSE…TLMVKVVMVT (95 aa). A phosphoserine mark is found at serine 671 and serine 791. Residues 841 to 894 form a disordered region; the sequence is ISASESPGPGGLASLGKHRPKGFFATESSFDPHHRSQPSYDRPSFLPPGPGLML. Position 898 is a phosphoserine (serine 898). 2 disordered regions span residues 917–1233 and 1245–1290; these read SRSL…LDFT and RREG…RHSK. Over residues 928 to 947 the composition is skewed to pro residues; it reads IPPPPTTSPPEPPYSTPPAP. Position 958 is an omega-N-methylarginine (arginine 958). Low complexity predominate over residues 969–980; it reads PLPASSPSSFDG. Basic residues predominate over residues 1004-1028; it reads AHHHPPHHHHHHAPPPQPHHHHAHP. Arginine 1059 bears the Omega-N-methylarginine mark. Residues 1064–1089 are compositionally biased toward low complexity; sequence SPTSGAPSPSHHSSSGGSSGPAQAPA. Omega-N-methylarginine is present on residues arginine 1098 and arginine 1109. 2 stretches are compositionally biased toward low complexity: residues 1132 to 1146 and 1171 to 1184; these read SLPP…ALPR and STSS…GSST. Residues 1203-1224 show a composition bias toward pro residues; it reads SPAPATSPVPPSPSPVPTPASP. Over residues 1245–1256 the composition is skewed to basic and acidic residues; that stretch reads RREGGWQNEARR. Arginine 1257 carries the post-translational modification Asymmetric dimethylarginine. Position 1291 is a phosphoserine (serine 1291). Disordered regions lie at residues 1308–1331, 1361–1417, 1429–1458, 1500–1725, 1740–1790, 1828–1866, 1898–1988, and 2002–2029; these read GGSS…GSSS, LAAR…VLRL, RAGL…PPTA, FLEN…AGVA, GQAF…TPTS, VPPV…QPQA, PWAR…STRH, and RRAP…LPIL. Positions 1363 to 1372 are enriched in basic and acidic residues; sequence ARERALKESS. The segment covering 1378–1395 has biased composition (pro residues); sequence PQPPPRPPSPRYDAPPPT. Residues 1396-1408 are compositionally biased toward basic residues; the sequence is LHHHSPHSPHSPH. Position 1429 is an omega-N-methylarginine (arginine 1429). Serine 1442 bears the Phosphoserine mark. A compositionally biased stretch (low complexity) spans 1530–1541; it reads RRVLPTSPTSPR. Residues 1589–1615 show a composition bias toward pro residues; it reads PLTPGPPHPLPDPPSPATPLPAAPPPA. Residues 1624–1641 are compositionally biased toward polar residues; sequence DSTASSLTSYDSEVATLT. Pro residues predominate over residues 1648–1676; sequence PGDPPAPGPPAPAAPAPPAPQPGPDPPPG. Positions 1684 to 1694 are enriched in basic and acidic residues; the sequence is VDSRSSSDHPL. Residues 1695-1708 show a composition bias toward low complexity; that stretch reads ETISSASTLSSLSA. The segment covering 1709 to 1724 has biased composition (gly residues); it reads EGGGNTGGVAGGGAGV. A compositionally biased stretch (pro residues) spans 1850 to 1861; the sequence is PGPPPPPLPGPL. Arginine 1901 bears the Omega-N-methylarginine mark. 3 stretches are compositionally biased toward low complexity: residues 1934-1945, 1960-1985, and 2002-2012; these read SQTSLLSKPSSS, TGSG…ASAS, and RRAPSPSLLPA. Omega-N-methylarginine occurs at positions 2022, 2042, and 2080. The SAM domain occupies 2104-2167; sequence WTKFDVADWL…DRALKFFLER (64 aa).

This sequence belongs to the SHANK family. May homomultimerize via its SAM domain. Interacts with the C-terminus of SSTR2 via the PDZ domain. Interacts with SHARPIN, SPTAN1, HOMER1 and DLGAP1/GKAP. Part of a complex with DLG4/PSD-95 and DLGAP1/GKAP. Interacts with BAIAP2. Interacts with IGSF9. Interacts with HOMER1 and HOMER3. As to expression, in brain, highly expressed in cortex, hippocampus and cerebellum.

It localises to the cytoplasm. The protein localises to the synapse. Its subcellular location is the postsynaptic density. Functionally, seems to be an adapter protein in the postsynaptic density (PSD) of excitatory synapses that interconnects receptors of the postsynaptic membrane including NMDA-type and metabotropic glutamate receptors, and the actin-based cytoskeleton. Plays a role in the structural and functional organization of the dendritic spine and synaptic junction. Overexpression promotes maturation of dendritic spines and the enlargement of spine heads via its ability to recruit Homer to postsynaptic sites, and enhances presynaptic function. This Mus musculus (Mouse) protein is SH3 and multiple ankyrin repeat domains protein 1 (Shank1).